Here is a 350-residue protein sequence, read N- to C-terminus: Arginine N-succinyltransferase (350 aa).

Leu125 serves as a coordination point for succinyl-CoA. His229 functions as the Proton donor in the catalytic mechanism.

The protein belongs to the arginine N-succinyltransferase family.

It catalyses the reaction succinyl-CoA + L-arginine = N(2)-succinyl-L-arginine + CoA + H(+). It functions in the pathway amino-acid degradation; L-arginine degradation via AST pathway; L-glutamate and succinate from L-arginine: step 1/5. Functionally, catalyzes the transfer of succinyl-CoA to arginine to produce N(2)-succinylarginine. This chain is Arginine N-succinyltransferase, found in Yersinia pestis.